The following is a 418-amino-acid chain: Transmembrane protease serine 11D (418 aa).

Residues M1–C20 are Cytoplasmic-facing. The helical; Signal-anchor for type II membrane protein transmembrane segment at F21–L41 threads the bilayer. Residues A42–I418 are Extracellular-facing. The SEA domain occupies K46–Q163. N144 carries an N-linked (GlcNAc...) asparagine glycan. 4 disulfides stabilise this stretch: C173–C292, C212–C228, C337–C353, and C364–C393. The Peptidase S1 domain occupies I187–G417. Active-site charge relay system residues include H227 and D272. S368 functions as the Charge relay system in the catalytic mechanism.

The protein belongs to the peptidase S1 family. As to quaternary structure, monomer. In terms of tissue distribution, located in the cells of the submucosal serous glands of the bronchi and trachea.

Its subcellular location is the cell membrane. It localises to the secreted. With respect to regulation, strongly inhibited by diisopropyl fluorophosphate, leupeptin, antipain, aprotinin, and soybean trypsin inhibitor, but hardly inhibited by secretory leukocyte protease inhibitor at 10 microM. Functionally, may play some biological role in the host defense system on the mucous membrane independently of or in cooperation with other substances in airway mucous or bronchial secretions. Plays a role in the proteolytic processing of ACE2. Proteolytically cleaves and activates the human coronavirus 229E (HCoV-229E) spike glycoprotein which facilitate virus-cell membrane fusions; spike proteins are synthesized and maintained in precursor intermediate folding states and proteolysis permits the refolding and energy release required to create stable virus-cell linkages and membrane coalescence. Preferentially cleaves the C-terminal side of arginine residues at the P1 position of certain peptides, cleaving Boc-Phe-Ser-Arg-4-methylcoumaryl-7-amide most efficiently and having an optimum pH of 8.6 with this substrate. This is Transmembrane protease serine 11D (TMPRSS11D) from Homo sapiens (Human).